Reading from the N-terminus, the 178-residue chain is uncharacterized protein (178 aa).

This sequence belongs to the mycobacterial PPE family.

This is an uncharacterized protein from Mycobacterium tuberculosis (strain CDC 1551 / Oshkosh).